Here is a 5104-residue protein sequence, read N- to C-terminus: Malformin synthetase mlfA (5104 aa).

The segment at 225–616 is adenylation 1; the sequence is ERHAVNRPHS…CGRADTQVKL (392 aa). The 74-residue stretch at 757 to 830 folds into the Carrier 1 domain; the sequence is SRLEQEIQLA…EAASLAEVQE (74 aa). Serine 791 carries the post-translational modification O-(pantetheine 4'-phosphoryl)serine. Residues 868–1299 are condensation 1; sequence EDVFPCTTMQ…ALNTLSLLQA (432 aa). Positions 1327 to 1716 are adenylation 2; sequence DRWVTRQPEG…GRKDTQVKLR (390 aa). The region spanning 1854-1931 is the Carrier 2 domain; the sequence is TPASELERTL…QLAAEFGGPA (78 aa). Serine 1891 carries the O-(pantetheine 4'-phosphoryl)serine modification. Disordered stretches follow at residues 1928 to 1961 and 1998 to 2025; these read GGPA…DGVD and TNKT…KVDS. 2 stretches are compositionally biased toward low complexity: residues 1934–1958 and 2003–2013; these read SASS…STND and SVSSSSSSSSS. A condensation 2 region spans residues 2066–2481; that stretch reads EDIYPATPLQ…TVSYSDKEAL (416 aa). Positions 2504–2896 are adenylation 3; it reads VRTPHAPAVC…IGRRDGQLKL (393 aa). One can recognise a Carrier 3 domain in the interval 3032–3108; the sequence is RPVTSQEREM…QLICHLNTIR (77 aa). At serine 3069 the chain carries O-(pantetheine 4'-phosphoryl)serine. Condensation stretches follow at residues 3125-3590 and 3611-4029; these read WVAL…TYDQ and NIYP…EQLV. Residues 4054–4444 form an adenylation 4 region; it reads HSSREAVCAW…VGRKDNQIKF (391 aa). The Carrier 4 domain occupies 4578–4654; it reads MPSTAAERKM…DLSDQARSLI (77 aa). An O-(pantetheine 4'-phosphoryl)serine modification is found at serine 4615. The segment at 4691 to 5018 is condensation 5; sequence DVLPTTSFQR…LQTIVQHQNN (328 aa).

Belongs to the NRP synthetase family.

The protein operates within secondary metabolite biosynthesis. Functionally, nonribosomal peptide synthetase; part of the gene cluster that mediates the biosynthesis of malformins, cyclic pentapeptides with a disulfide bond between 2 consecutive cysteins, that show potential anti-tumor as well as antimalarial and antitrypanosomal properties. The nonribosomal peptide synthetase mlfA is responsible of the formation of the cyclic pentapeptide. The malformin biosynthesis clusters in malformin-producing fungi also contain enzymes involved in the formation of the disulfide bond between the two consecutive cysteins within malformins, in addition to additional tailoring enzymes such as methyltransferases or oxidoreductases. They are also composed of up to 4 major facilitator superfamily transporters, and transcription factors probably involved in the regulation of the expression of those clusters. The chain is Malformin synthetase mlfA from Aspergillus vadensis (strain CBS 113365 / IMI 142717 / IBT 24658).